A 256-amino-acid chain; its full sequence is Imidazole glycerol phosphate synthase subunit HisF (256 aa).

Active-site residues include D11 and D130.

This sequence belongs to the HisA/HisF family. Heterodimer of HisH and HisF.

It localises to the cytoplasm. It catalyses the reaction 5-[(5-phospho-1-deoxy-D-ribulos-1-ylimino)methylamino]-1-(5-phospho-beta-D-ribosyl)imidazole-4-carboxamide + L-glutamine = D-erythro-1-(imidazol-4-yl)glycerol 3-phosphate + 5-amino-1-(5-phospho-beta-D-ribosyl)imidazole-4-carboxamide + L-glutamate + H(+). The protein operates within amino-acid biosynthesis; L-histidine biosynthesis; L-histidine from 5-phospho-alpha-D-ribose 1-diphosphate: step 5/9. Functionally, IGPS catalyzes the conversion of PRFAR and glutamine to IGP, AICAR and glutamate. The HisF subunit catalyzes the cyclization activity that produces IGP and AICAR from PRFAR using the ammonia provided by the HisH subunit. In Synechococcus sp. (strain CC9605), this protein is Imidazole glycerol phosphate synthase subunit HisF.